We begin with the raw amino-acid sequence, 615 residues long: Protein translocase subunit SecD (615 aa).

6 consecutive transmembrane segments (helical) span residues 10–30, 452–472, 477–497, 504–524, 548–570, and 585–605; these read YVML…NLFG, QGLE…IIFY, LIAT…MSLL, MPGI…NVLI, GAFS…LYAV, and GVAT…NLLY.

Belongs to the SecD/SecF family. SecD subfamily. In terms of assembly, forms a complex with SecF. Part of the essential Sec protein translocation apparatus which comprises SecA, SecYEG and auxiliary proteins SecDF-YajC and YidC.

It localises to the cell inner membrane. Part of the Sec protein translocase complex. Interacts with the SecYEG preprotein conducting channel. SecDF uses the proton motive force (PMF) to complete protein translocation after the ATP-dependent function of SecA. This is Protein translocase subunit SecD from Shigella flexneri.